The chain runs to 260 residues: Apolipoprotein A-I (260 aa).

The first 18 residues, 1 to 18 (MKFAALALALLLAVGSHA), serve as a signal peptide directing secretion. The tract at residues 32 to 63 (ARAVLDVYLTQVKDMSLRAVNQLDDPQYAEFK) is 3 X approximate tandem repeats. 2 tandem repeats follow at residues 64-85 (TNLA…GSVS) and 87-107 (MTDS…ESLN). Residues 64–260 (TNLAQRIEEM…EIIAASVTKS (197 aa)) form a 10 X approximate tandem repeats region. Residues 108-118 (VDLEALKSSLA) form a 3; half-length repeat. 5 repeat units span residues 119 to 140 (PQNE…TLLT), 141 to 162 (PIYN…TRLE), 163 to 184 (PVME…AVLM), 185 to 206 (PMVE…EVVQ), and 207 to 225 (PYVQ…QAQT). The 9; half-length repeat unit spans residues 226–236 (VDTDALRTKIT). Residues 237–260 (PLVEEIKVKMNAIFEIIAASVTKS) form repeat 10.

The protein belongs to the apolipoprotein A1/A4/E family. As to expression, strong expression in liver with lower expression in intestine.

The protein resides in the secreted. Functionally, participates in the reverse transport of cholesterol from tissues to the liver for excretion by promoting cholesterol efflux from tissues and by acting as a cofactor for the lecithin cholesterol acyltransferase (LCAT). This chain is Apolipoprotein A-I (apoa1), found in Sparus aurata (Gilthead sea bream).